A 1105-amino-acid polypeptide reads, in one-letter code: AP-3 complex subunit beta-1 (1105 aa).

Disordered stretches follow at residues 1–26 and 271–292; these read MSSN…EATS and KNFY…KKSY. Ser-276 and Ser-610 each carry phosphoserine. The tract at residues 668–824 is disordered; sequence KKEKPMKKFY…KPQQERHPPS (157 aa). The segment covering 679 to 704 has biased composition (acidic residues); that stretch reads ESEEEEDEDEDEDEEEEEKEDEDENP. Composition is skewed to low complexity over residues 705 to 722 and 730 to 741; these read SDSS…SGDT and DSSSGQDSETGS. Residues 750 to 759 are compositionally biased toward basic residues; sequence VAKRNSKTKR. Residues 760–774 show a composition bias toward basic and acidic residues; that stretch reads KSDSENREKKNENSK. Phosphoserine is present on residues Ser-761 and Ser-763. Over residues 775-788 the composition is skewed to low complexity; the sequence is ASESSSEESSSMED. Over residues 789–799 the composition is skewed to acidic residues; the sequence is SSSESESESGS. The span at 811–824 shows a compositional bias: basic and acidic residues; sequence AKERKPQQERHPPS.

This sequence belongs to the adaptor complexes large subunit family. As to quaternary structure, adaptor protein complex 3 (AP-3) is a heterotetramer composed of two large adaptins (delta-type subunit AP3D1 and beta-type subunit AP3B1 or AP3B2), a medium adaptin (mu-type subunit AP3M1 or AP3M2) and a small adaptin (sigma-type subunit APS1 or AP3S2). AP-3 associates with the BLOC-1 complex. Interacts with KIF3A; interaction is direct; interaction is impaired by pyrophosphorylation of AP3B1. Post-translationally, phosphorylated on serine residues. In terms of processing, pyrophosphorylated by 5-diphosphoinositol pentakisphosphate (5-IP7). Pyrophosphorylation impairs interaction with KIF3A. Serine pyrophosphorylation is achieved by Mg(2+)-dependent, but enzyme independent transfer of a beta-phosphate from a inositol pyrophosphate to a pre-phosphorylated serine residue. As to expression, ubiquitously expressed.

It localises to the cytoplasmic vesicle. The protein resides in the clathrin-coated vesicle membrane. It is found in the golgi apparatus. Functionally, subunit of non-clathrin- and clathrin-associated adaptor protein complex 3 (AP-3) that plays a role in protein sorting in the late-Golgi/trans-Golgi network (TGN) and/or endosomes. The AP complexes mediate both the recruitment of clathrin to membranes and the recognition of sorting signals within the cytosolic tails of transmembrane cargo molecules. AP-3 appears to be involved in the sorting of a subset of transmembrane proteins targeted to lysosomes and lysosome-related organelles. In concert with the BLOC-1 complex, AP-3 is required to target cargos into vesicles assembled at cell bodies for delivery into neurites and nerve terminals. This Mus musculus (Mouse) protein is AP-3 complex subunit beta-1 (Ap3b1).